Consider the following 876-residue polypeptide: Radial spoke head 10 homolog B (876 aa).

Composition is skewed to basic and acidic residues over residues 1-16 and 57-66; these read MVKE…DKSA and PKRDSEHTYQ. A disordered region spans residues 1-72; that stretch reads MVKEKKKADK…HTYQSEDETQ (72 aa). MORN repeat units lie at residues 86 to 108, 109 to 131, 132 to 154, 155 to 177, 179 to 201, 204 to 226, 227 to 249, 251 to 273, 284 to 306, and 307 to 329; these read YEGE…GGNT, YHGM…DGLK, YEGD…DGST, YEGE…TQPV, YIGH…QEGT, YEGD…SGNI, YEGQ…TTNE, YTGH…LKRI, YIGA…SGAM, and YEGE…NGRV. Disordered stretches follow at residues 360-386 and 841-876; these read SQRS…LDGS and EPPE…KKKK. Over residues 373–386 the composition is skewed to basic and acidic residues; the sequence is ADREPETLRKLDGS. Residues 752 to 841 are a coiled coil; that stretch reads EKYEKSKDEQ…FELDITVLKE (90 aa).

As to quaternary structure, interacts with RSPH6A. Does not appear to be part of the axonemal radial spoke complexes 1 or 2.

It is found in the cytoplasm. The protein resides in the cytoskeleton. Its subcellular location is the cilium axoneme. The protein localises to the cell projection. It localises to the cilium. It is found in the flagellum. Its function is as follows. May function as part of the axonemal radial spoke complex 3 (RS3). Radial spoke complexes are important for ciliary motility. The polypeptide is Radial spoke head 10 homolog B (Rsph10b) (Rattus norvegicus (Rat)).